Consider the following 52-residue polypeptide: Phospholamban (52 aa).

Residue Met-1 is modified to N-acetylmethionine. The Cytoplasmic segment spans residues 1 to 31 (MEKVQYITRSALRRASTLEVNPQARQRLQEL). A Phosphoserine; by PKA modification is found at Ser-16. Thr-17 is subject to Phosphothreonine; by CaMK. The chain crosses the membrane as a helical span at residues 32-52 (FVNFCLILICLLLICIIVMLL).

The protein belongs to the phospholamban family. Homopentamer. Post-translationally, phosphorylated in response to beta-adrenergic stimulation. Phosphorylation by PKA abolishes the inhibition of ATP2A2-mediated calcium uptake. In terms of tissue distribution, heart.

Its subcellular location is the endoplasmic reticulum membrane. It localises to the sarcoplasmic reticulum membrane. It is found in the mitochondrion membrane. The protein resides in the membrane. In terms of biological role, reversibly inhibits the activity of ATP2A2/SERCA2 in cardiac sarcoplasmic reticulum by decreasing the apparent affinity of the ATPase for Ca(2+). Binds preferentially to the ATP-bound E1 conformational form of ATP2A2 which predominates at low Ca(2+) concentrations during the diastolic phase of the cardiac cycle. Inhibits ATP2A2 Ca(2+) affinity by disrupting its allosteric activation by ATP. Modulates the contractility of the heart muscle in response to physiological stimuli via its effects on ATP2A2. Modulates calcium re-uptake during muscle relaxation and plays an important role in calcium homeostasis in the heart muscle. The degree of ATP2A2 inhibition depends on the oligomeric state of PLN. ATP2A2 inhibition is alleviated by PLN phosphorylation. The protein is Phospholamban (PLN) of Gallus gallus (Chicken).